The chain runs to 227 residues: Cytochrome c oxidase subunit 2 (227 aa).

Residues 1 to 14 (MAYPFQLGLQDASS) lie on the Mitochondrial intermembrane side of the membrane. Residues 15-45 (PIMEELTNFHDHTLMIVFLISSLVLYIISSM) form a helical membrane-spanning segment. At 46 to 59 (LTTKMTHTSTMDAQ) the chain is on the mitochondrial matrix side. A helical transmembrane segment spans residues 60–87 (EVETIWTVLPAVILILIALPSLRILYMM). Topologically, residues 88–227 (DEINNPVLTV…HFENWSTSMI (140 aa)) are mitochondrial intermembrane. Cu cation is bound by residues His-161, Cys-196, Glu-198, Cys-200, His-204, and Met-207. A Mg(2+)-binding site is contributed by Glu-198.

The protein belongs to the cytochrome c oxidase subunit 2 family. In terms of assembly, component of the cytochrome c oxidase (complex IV, CIV), a multisubunit enzyme composed of 14 subunits. The complex is composed of a catalytic core of 3 subunits MT-CO1, MT-CO2 and MT-CO3, encoded in the mitochondrial DNA, and 11 supernumerary subunits COX4I, COX5A, COX5B, COX6A, COX6B, COX6C, COX7A, COX7B, COX7C, COX8 and NDUFA4, which are encoded in the nuclear genome. The complex exists as a monomer or a dimer and forms supercomplexes (SCs) in the inner mitochondrial membrane with NADH-ubiquinone oxidoreductase (complex I, CI) and ubiquinol-cytochrome c oxidoreductase (cytochrome b-c1 complex, complex III, CIII), resulting in different assemblies (supercomplex SCI(1)III(2)IV(1) and megacomplex MCI(2)III(2)IV(2)). Found in a complex with TMEM177, COA6, COX18, COX20, SCO1 and SCO2. Interacts with TMEM177 in a COX20-dependent manner. Interacts with COX20. Interacts with COX16. Cu cation is required as a cofactor.

The protein localises to the mitochondrion inner membrane. It carries out the reaction 4 Fe(II)-[cytochrome c] + O2 + 8 H(+)(in) = 4 Fe(III)-[cytochrome c] + 2 H2O + 4 H(+)(out). Component of the cytochrome c oxidase, the last enzyme in the mitochondrial electron transport chain which drives oxidative phosphorylation. The respiratory chain contains 3 multisubunit complexes succinate dehydrogenase (complex II, CII), ubiquinol-cytochrome c oxidoreductase (cytochrome b-c1 complex, complex III, CIII) and cytochrome c oxidase (complex IV, CIV), that cooperate to transfer electrons derived from NADH and succinate to molecular oxygen, creating an electrochemical gradient over the inner membrane that drives transmembrane transport and the ATP synthase. Cytochrome c oxidase is the component of the respiratory chain that catalyzes the reduction of oxygen to water. Electrons originating from reduced cytochrome c in the intermembrane space (IMS) are transferred via the dinuclear copper A center (CU(A)) of subunit 2 and heme A of subunit 1 to the active site in subunit 1, a binuclear center (BNC) formed by heme A3 and copper B (CU(B)). The BNC reduces molecular oxygen to 2 water molecules using 4 electrons from cytochrome c in the IMS and 4 protons from the mitochondrial matrix. The protein is Cytochrome c oxidase subunit 2 (MT-CO2) of Lophuromys flavopunctatus (Yellow-spotted brush-furred rat).